Here is an 890-residue protein sequence, read N- to C-terminus: Translation initiation factor IF-2 (890 aa).

Residues 50 to 304 (LRQGSPEQEE…LQQEFERPTA (255 aa)) are disordered. 3 stretches are compositionally biased toward basic and acidic residues: residues 112–125 (KRSD…RKQE), 136–147 (RALEQEEAKREE), and 217–262 (ALKE…QEAK). Residues 390 to 559 (GRAPVVTVMG…VLQAELQELK (170 aa)) enclose the tr-type G domain. The G1 stretch occupies residues 399-406 (GHVDHGKT). Residue 399–406 (GHVDHGKT) coordinates GTP. The G2 stretch occupies residues 424–428 (GITQH). A G3 region spans residues 445–448 (DTPG). Residues 445–449 (DTPGH) and 499–502 (NKMD) contribute to the GTP site. The segment at 499-502 (NKMD) is G4. Residues 535-537 (SAM) form a G5 region.

It belongs to the TRAFAC class translation factor GTPase superfamily. Classic translation factor GTPase family. IF-2 subfamily.

The protein localises to the cytoplasm. Functionally, one of the essential components for the initiation of protein synthesis. Protects formylmethionyl-tRNA from spontaneous hydrolysis and promotes its binding to the 30S ribosomal subunits. Also involved in the hydrolysis of GTP during the formation of the 70S ribosomal complex. The polypeptide is Translation initiation factor IF-2 (Halorhodospira halophila (strain DSM 244 / SL1) (Ectothiorhodospira halophila (strain DSM 244 / SL1))).